The chain runs to 331 residues: XylDLEGF operon transcriptional activator 1 (331 aa).

Residues 214-315 (ERVVQFIEEN…GELPSDTLRR (102 aa)) enclose the HTH araC/xylS-type domain. 2 DNA-binding regions (H-T-H motif) span residues 231-252 (ERLAELALMSPRSLYTLFEKHA) and 282-305 (VTEMALDYGFFHTGRFAENYRSTF).

It localises to the cytoplasm. Functionally, regulatory protein of the TOL plasmid xyl operons. XylS activates the xylXYZLTEGFJQKIH operon required for the degradation of toluene, m-xylene and p-xylene. The sequence is that of XylDLEGF operon transcriptional activator 1 (xylS1) from Pseudomonas putida (Arthrobacter siderocapsulatus).